The primary structure comprises 316 residues: NADH-quinone oxidoreductase subunit H (316 aa).

8 helical membrane passes run 6–26 (PAVVIGILLSTVIVAAWLIWV), 74–94 (FVIAPAIVMVTMLLGFVVVPF), 98–118 (VGVIDFNFGLLYFFALSSLAV), 145–165 (ISYEVFMGLAAMGVVMLAGSF), 177–197 (GWYVLPQFAGFLAFLVAAVAE), 233–253 (YLGITLNSAILVTLFFGGWLG), 256–276 (FLPPLAWFILKTLVFILFFIL), and 296–316 (VMLPLTLANIVVTGAVGLSVP).

The protein belongs to the complex I subunit 1 family. NDH-1 is composed of 14 different subunits. Subunits NuoA, H, J, K, L, M, N constitute the membrane sector of the complex.

It is found in the cell inner membrane. It carries out the reaction a quinone + NADH + 5 H(+)(in) = a quinol + NAD(+) + 4 H(+)(out). Its function is as follows. NDH-1 shuttles electrons from NADH, via FMN and iron-sulfur (Fe-S) centers, to quinones in the respiratory chain. The immediate electron acceptor for the enzyme in this species is believed to be ubiquinone. Couples the redox reaction to proton translocation (for every two electrons transferred, four hydrogen ions are translocated across the cytoplasmic membrane), and thus conserves the redox energy in a proton gradient. This subunit may bind ubiquinone. The sequence is that of NADH-quinone oxidoreductase subunit H from Methylococcus capsulatus (strain ATCC 33009 / NCIMB 11132 / Bath).